The chain runs to 237 residues: Lectin ConGF (237 aa).

Residues Glu8 and Asp10 each coordinate Mn(2+). Residues Asp10, Tyr12, Asn14, and Asp19 each contribute to the Ca(2+) site. Asn14 serves as a coordination point for a carbohydrate. Residues Asp19 and His24 each contribute to the Mn(2+) site. Residues Leu99, Tyr100, Asp208, and Arg228 each coordinate a carbohydrate.

The protein belongs to the leguminous lectin family. In terms of assembly, homotetramer; dimer of dimers. Post-translationally, concanavalin A-like lectins of the Diocleinae subtribe undergo proteolytic processing referred to as circular permutation. The propeptide is split into an N-terminal and a C-terminal part, the gamma and beta chain, respectively. These are then religated in beta-gamma order to form the mature alpha chain. The beta and gamma chains can often be detected in cell extracts. Residues 1-118 of the mature chain, as displayed here, probably constitute the beta chain in the propeptide, residues 119-237 the gamma chain.

Functionally, lectin. Induces paw edema in mice. Has a weak vasorelaxant effect on rat aorta. Has anti-inflammatory and anti-nociceptive effects. The sequence is that of Lectin ConGF from Canavalia grandiflora (Jackbean).